The sequence spans 184 residues: LPS-assembly lipoprotein LptE (184 aa).

The signal sequence occupies residues 1-19; that stretch reads MRHRLFTLVLGLAVLITAG. The N-palmitoyl cysteine moiety is linked to residue cysteine 20. The S-diacylglycerol cysteine moiety is linked to residue cysteine 20.

Belongs to the LptE lipoprotein family. In terms of assembly, component of the lipopolysaccharide transport and assembly complex. Interacts with LptD.

It localises to the cell outer membrane. Together with LptD, is involved in the assembly of lipopolysaccharide (LPS) at the surface of the outer membrane. Required for the proper assembly of LptD. Binds LPS and may serve as the LPS recognition site at the outer membrane. The protein is LPS-assembly lipoprotein LptE of Pectobacterium atrosepticum (strain SCRI 1043 / ATCC BAA-672) (Erwinia carotovora subsp. atroseptica).